A 379-amino-acid polypeptide reads, in one-letter code: MNAVTYEHIKTCKQSGARLGIVHTPHGSFETPMFMPVGTQATVKTMSPEELKAMNAKIILSNTYHLWLRPGNDVIREAGGLHKFMNWDGPILTDSGGFQVFSLSDMRKIEEEGVHFRHHLNGSKLFLSPHKAMHIQNDLGSDIMMAFDECPPMPATYEYVKASIERTSRWAERCLEAHQRPEDQALFGIIQGGEYEDLRTQSAKDLVSMDFPGYAIGGLSVGEPKPIMYRMLEHTTPLMPFNKPRYLMGVGSPDALIEGAIRGIDMFDCVLPTRIARNGTCMTSKGRVVVKNAKYERDFTPLDEKCECYTCKNYTKAYLRHLIKADETFGIRLTTIHNLHFLLNLMEQVREAIRNDRLLDFKEEFFEEYGLNVENPKNF.

Residue Asp-94 is the Proton acceptor of the active site. Residues 94-98 (DSGGF), Asp-148, Gln-191, and Gly-218 contribute to the substrate site. An RNA binding region spans residues 249 to 255 (GVGSPDA). Residue Asp-268 is the Nucleophile of the active site. Residues 273–277 (TRIAR) form an RNA binding; important for wobble base 34 recognition region. Zn(2+) contacts are provided by Cys-306, Cys-308, Cys-311, and His-337.

It belongs to the queuine tRNA-ribosyltransferase family. Homodimer. Within each dimer, one monomer is responsible for RNA recognition and catalysis, while the other monomer binds to the replacement base PreQ1. It depends on Zn(2+) as a cofactor.

The catalysed reaction is 7-aminomethyl-7-carbaguanine + guanosine(34) in tRNA = 7-aminomethyl-7-carbaguanosine(34) in tRNA + guanine. It participates in tRNA modification; tRNA-queuosine biosynthesis. Its function is as follows. Catalyzes the base-exchange of a guanine (G) residue with the queuine precursor 7-aminomethyl-7-deazaguanine (PreQ1) at position 34 (anticodon wobble position) in tRNAs with GU(N) anticodons (tRNA-Asp, -Asn, -His and -Tyr). Catalysis occurs through a double-displacement mechanism. The nucleophile active site attacks the C1' of nucleotide 34 to detach the guanine base from the RNA, forming a covalent enzyme-RNA intermediate. The proton acceptor active site deprotonates the incoming PreQ1, allowing a nucleophilic attack on the C1' of the ribose to form the product. After dissociation, two additional enzymatic reactions on the tRNA convert PreQ1 to queuine (Q), resulting in the hypermodified nucleoside queuosine (7-(((4,5-cis-dihydroxy-2-cyclopenten-1-yl)amino)methyl)-7-deazaguanosine). This chain is Queuine tRNA-ribosyltransferase, found in Macrococcus caseolyticus (strain JCSC5402) (Macrococcoides caseolyticum).